We begin with the raw amino-acid sequence, 638 residues long: 1-deoxy-D-xylulose-5-phosphate synthase (638 aa).

Residues H76 and 117–119 (AHS) each bind thiamine diphosphate. D148 contacts Mg(2+). Thiamine diphosphate is bound by residues 149 to 150 (GS), N177, Y287, and E369. N177 serves as a coordination point for Mg(2+).

This sequence belongs to the transketolase family. DXPS subfamily. In terms of assembly, homodimer. Mg(2+) serves as cofactor. Requires thiamine diphosphate as cofactor.

The enzyme catalyses D-glyceraldehyde 3-phosphate + pyruvate + H(+) = 1-deoxy-D-xylulose 5-phosphate + CO2. It participates in metabolic intermediate biosynthesis; 1-deoxy-D-xylulose 5-phosphate biosynthesis; 1-deoxy-D-xylulose 5-phosphate from D-glyceraldehyde 3-phosphate and pyruvate: step 1/1. Its function is as follows. Catalyzes the acyloin condensation reaction between C atoms 2 and 3 of pyruvate and glyceraldehyde 3-phosphate to yield 1-deoxy-D-xylulose-5-phosphate (DXP). In Rhodopseudomonas palustris (strain HaA2), this protein is 1-deoxy-D-xylulose-5-phosphate synthase.